The sequence spans 288 residues: Ice-binding protein (288 aa).

The signal sequence occupies residues 1 to 22 (MFSTTLINTFSLGLLAVVSVVA). 2 consecutive short sequence motifs (ice-binding site motif (T-A/G-X-T/N)) follow at residues 75–78 (TAGN) and 154–157 (TAFN). Residue Asn194 is glycosylated (N-linked (GlcNAc...) asparagine). Short sequence motifs (ice-binding site motif (T-A/G-X-T/N)) lie at residues 196–199 (TGVT) and 265–268 (TGAT).

This sequence belongs to the ice-binding protein family.

It localises to the secreted. Its function is as follows. Binds ice crystals and most probably inhibits their growth in order to prevent cell damage from extracellular ice. This Lentinula edodes (Shiitake mushroom) protein is Ice-binding protein.